Here is a 164-residue protein sequence, read N- to C-terminus: Protein DOWNSTREAM OF FLC (164 aa).

The signal sequence occupies residues 1 to 23; that stretch reads MAKSFVPLIAVLCVLVLPLAAMA. 3 disulfides stabilise this stretch: Cys-36/Cys-107, Cys-39/Cys-148, and Cys-60/Cys-95.

Belongs to the Ole e I family.

The protein localises to the secreted. In terms of biological role, part of a three-gene cluster containing FLC, UFC and DFC, which is coordinately regulated in response to vernalization. Not regulated by FLX. This chain is Protein DOWNSTREAM OF FLC (DFC), found in Arabidopsis thaliana (Mouse-ear cress).